Here is a 331-residue protein sequence, read N- to C-terminus: tRNA pseudouridine synthase B (331 aa).

Asp51 serves as the catalytic Nucleophile.

The protein belongs to the pseudouridine synthase TruB family. Type 1 subfamily.

The enzyme catalyses uridine(55) in tRNA = pseudouridine(55) in tRNA. Its function is as follows. Responsible for synthesis of pseudouridine from uracil-55 in the psi GC loop of transfer RNAs. This is tRNA pseudouridine synthase B from Verminephrobacter eiseniae (strain EF01-2).